The primary structure comprises 398 residues: Lysophospholipid transporter LplT (398 aa).

12 consecutive transmembrane segments (helical) span residues 16-36, 53-73, 91-111, 139-159, 163-183, 195-213, 227-247, 253-273, 286-306, 310-330, 344-364, and 372-392; these read MIAV…LLFA, ILQM…GQVA, AGAL…LVGV, LMEA…GILA, IVAA…ANLY, SWTP…VVLW, LFWG…PVAL, ATPT…AGAA, MPAG…TTLF, ALLL…NALL, IAVQ…LYSL, and VVGV…ALWL.

Belongs to the major facilitator superfamily. LplT (TC 2.A.1.42) family.

Its subcellular location is the cell inner membrane. In terms of biological role, catalyzes the facilitated diffusion of 2-acyl-glycero-3-phosphoethanolamine (2-acyl-GPE) into the cell. In Serratia proteamaculans (strain 568), this protein is Lysophospholipid transporter LplT.